The sequence spans 323 residues: Lipoyl synthase (323 aa).

Cys-53, Cys-58, Cys-64, Cys-79, Cys-83, Cys-86, and Ser-293 together coordinate [4Fe-4S] cluster. A Radical SAM core domain is found at 65–282 (WTKKQATVMI…AATARAKGFS (218 aa)).

It belongs to the radical SAM superfamily. Lipoyl synthase family. [4Fe-4S] cluster is required as a cofactor.

The protein resides in the cytoplasm. The catalysed reaction is [[Fe-S] cluster scaffold protein carrying a second [4Fe-4S](2+) cluster] + N(6)-octanoyl-L-lysyl-[protein] + 2 oxidized [2Fe-2S]-[ferredoxin] + 2 S-adenosyl-L-methionine + 4 H(+) = [[Fe-S] cluster scaffold protein] + N(6)-[(R)-dihydrolipoyl]-L-lysyl-[protein] + 4 Fe(3+) + 2 hydrogen sulfide + 2 5'-deoxyadenosine + 2 L-methionine + 2 reduced [2Fe-2S]-[ferredoxin]. It participates in protein modification; protein lipoylation via endogenous pathway; protein N(6)-(lipoyl)lysine from octanoyl-[acyl-carrier-protein]: step 2/2. Its function is as follows. Catalyzes the radical-mediated insertion of two sulfur atoms into the C-6 and C-8 positions of the octanoyl moiety bound to the lipoyl domains of lipoate-dependent enzymes, thereby converting the octanoylated domains into lipoylated derivatives. This is Lipoyl synthase from Zymomonas mobilis subsp. mobilis (strain ATCC 31821 / ZM4 / CP4).